The sequence spans 963 residues: Importin-13 (963 aa).

HEAT repeat units follow at residues 24 to 54, 56 to 88, 95 to 135, 142 to 179, 194 to 231, 236 to 268, 276 to 325, 330 to 372, 375 to 438, 440 to 476, 487 to 522, 524 to 558, 562 to 600, 603 to 648, 676 to 716, 720 to 754, 761 to 803, 815 to 845, 860 to 893, and 897 to 931; these read ESVE…QAQV, PQAW…KTSR, TDQY…LSMM, AVAD…EFQT, LAVE…SWVQ, LQDC…NAIS, VNTL…ALLD, WQSF…DDIL, EAEK…YEML, AELL…FQSI, VVPG…WLAD, PVMI…CREC, LPPY…LLSA, VEEI…SNLF, PVVV…VKTL, FAPM…VHIF, FPPI…ALKR, VKAV…TELL, EDGR…FALN, and FSLL…QQIL. Positions 45–111 constitute an Importin N-terminal domain; it reads AQKWLMQAQV…KAQLFTQITR (67 aa).

Belongs to the importin beta family. In terms of assembly, interacts with UBC9, RAN, RBM8A, eIF-1A and PAX6.

The protein resides in the cytoplasm. It localises to the nucleus. Functions in nuclear protein import as nuclear transport receptor. Serves as receptor for nuclear localization signals (NLS) in cargo substrates. Is thought to mediate docking of the importin/substrate complex to the nuclear pore complex (NPC) through binding to nucleoporin and the complex is subsequently translocated through the pore by an energy requiring, Ran-dependent mechanism. At the nucleoplasmic side of the NPC, Ran binds to the importin, the importin/substrate complex dissociates and importin is re-exported from the nucleus to the cytoplasm where GTP hydrolysis releases Ran. The directionality of nuclear import is thought to be conferred by an asymmetric distribution of the GTP- and GDP-bound forms of Ran between the cytoplasm and nucleus. Mediates the nuclear import of UBC9, the RBM8A/MAGOH complex, PAX6 and probably other members of the paired homeobox family. Also mediates nuclear export of eIF-1A, and the cytoplasmic release of eIF-1A is triggered by the loading of import substrates onto IPO13. This Pongo abelii (Sumatran orangutan) protein is Importin-13 (IPO13).